Here is a 1201-residue protein sequence, read N- to C-terminus: Zinc finger protein sdc-1 (1201 aa).

C2H2-type zinc fingers lie at residues 117 to 139, 145 to 168, 233 to 254, 268 to 290, 486 to 513, 521 to 543, and 652 to 674; these read LTCA…RGVH, YMCQ…RTSC, SSCH…GNVH, YFCH…WRLH, IVCH…LLRH, YHCA…INDC, and VVCF…DYCH. Residues 1164–1201 are disordered; sequence KRRNSETREHELIELDTDDLNEPSTSDGRYSFGHHGYR. Positions 1167-1176 are enriched in basic and acidic residues; that stretch reads NSETREHELI.

In terms of assembly, component of the SDC complex, which consists of sdc-1, sdc-2 and sdc-3. Within the complex, interacts with sdc-2 and sdc-3.

The protein resides in the nucleus. The protein localises to the chromosome. Its function is as follows. Embryonic transcription factor regulating downstream genes involved specifically in the sex determination and dosage compensation pathways, or regulating other genes involved in the coordinate control of both processes. Component of the SDC complex that functions in sex determination and in X chromosome dosage compensation specifically in hermaphrodite (XX) animals. Involved in the recruitment of the condensin I-like dosage compensation complex to the male sex-determining autosomal gene her-1, thereby contributing to its repression and initiating hermaphrodite sexual development. Similarly, might contribute to X-linked gene repression through recruitment of the dosage compensation complex to the X chromosomes in hermaphrodites. Seems to be involved in the depletion of histone H4 lysine 16 acetylation (H4K16ac) on dosage compensated X chromosomes. Plays a role in developmental rate and body fat regulation downstream of the TOR complex 2 pathway. This is Zinc finger protein sdc-1 (sdc-1) from Caenorhabditis elegans.